Reading from the N-terminus, the 873-residue chain is MEIASKYNPAEVEGKWYQYWLDNGFFKSKPDGREPYTIVIPPPNVTGVLHMGHMLNNTIQDILVRRARMMGKNACWVPGTDHASIATEAKVVNRLAGQGIKKTDLTRDEFLRHAWEWKEEHGGIILKQLRKLGASCDWDRTAFTMDEKRSESVIKVFVDLYKKGLIYRGVRMVNWDPKALTALSDEEVIYKEEHSKLYYLRYKIVGEEGYAVVATTRPETIMGDTAMCINPNDPKNQHLRGKKVIVPLVGREIPVIEDDYVDIEFGTGCLKVTPAHDVNDYMLGEKYNLPSIDIFNDNGTLSEAAGLYVGMDRFDVRKQIEEDLRNAGLLEKVEAYENKVGFSERTNVPIEPKLSMQWFLKMEHLAQIALEPVMKDDIKFYPPKFKNTYRHWMENIKDWCISRQLWWGHRIPAYFLPEGGYVVAETEEKALELAKEKCGNPNLTMSDLRQDEDVLDTWFSSWLWPISLFDGINNPDNEEINYYYPTSDLVTGPDIIFFWVARMIMAGYEYRGKMPFKSVYFTGIVRDKLGRKMSKSLGNSPDPLQLIEQYGADGVRMGLMLAAPAGNDIPFDDALCEQGRNFNNKIWNAFRLVKGWTVDDTIAQPEASAIAVKWFKMQLDKTIAEVDDSFSKYRLSEAMMAVYKLFWDEFSSWYLEMVKPGYQQPIDKATYEATLGFFDALLRLLHPFMPFITEELWQALEPRKEGESLMVAQMPEIAVIDSAYLDAFEIVKEIVGGVRTIRLQKNIPNKDALELQIVGEHNEAFNAVIAKMCNLSSISKVEEKAAGAVSFLVRTTEYAVPLGNLINVEEELAKLQEELKYQKGFLASVMKKLGNENFVSKAPAKVIEMEKKKQADAESKIKSIEESIAALTK.

The short motif at 43–53 is the 'HIGH' region element; it reads PNVTGVLHMGH. Residues 532 to 536 carry the 'KMSKS' region motif; that stretch reads KMSKS. ATP is bound at residue K535. The stretch at 802–873 forms a coiled coil; sequence LGNLINVEEE…IEESIAALTK (72 aa).

It belongs to the class-I aminoacyl-tRNA synthetase family. ValS type 1 subfamily. In terms of assembly, monomer.

Its subcellular location is the cytoplasm. The enzyme catalyses tRNA(Val) + L-valine + ATP = L-valyl-tRNA(Val) + AMP + diphosphate. In terms of biological role, catalyzes the attachment of valine to tRNA(Val). As ValRS can inadvertently accommodate and process structurally similar amino acids such as threonine, to avoid such errors, it has a 'posttransfer' editing activity that hydrolyzes mischarged Thr-tRNA(Val) in a tRNA-dependent manner. The chain is Valine--tRNA ligase from Parabacteroides distasonis (strain ATCC 8503 / DSM 20701 / CIP 104284 / JCM 5825 / NCTC 11152).